Reading from the N-terminus, the 491-residue chain is Ketol-acid reductoisomerase (NADP(+)) (491 aa).

The KARI N-terminal Rossmann domain occupies 14 to 208; the sequence is LDQLGRCRFM…GGHRAGVLES (195 aa). NADP(+) is bound by residues 45 to 48, Arg68, Arg76, Ser78, and 108 to 110; these read CGAQ and DKQ. The active site involves His132. An NADP(+)-binding site is contributed by Gly158. KARI C-terminal knotted domains are found at residues 209 to 344 and 345 to 485; these read SFVA…NAPK and YEGK…MTDM. Asp217, Glu221, Glu389, and Glu393 together coordinate Mg(2+). Ser414 is a substrate binding site.

The protein belongs to the ketol-acid reductoisomerase family. Mg(2+) is required as a cofactor.

The catalysed reaction is (2R)-2,3-dihydroxy-3-methylbutanoate + NADP(+) = (2S)-2-acetolactate + NADPH + H(+). It carries out the reaction (2R,3R)-2,3-dihydroxy-3-methylpentanoate + NADP(+) = (S)-2-ethyl-2-hydroxy-3-oxobutanoate + NADPH + H(+). The protein operates within amino-acid biosynthesis; L-isoleucine biosynthesis; L-isoleucine from 2-oxobutanoate: step 2/4. It functions in the pathway amino-acid biosynthesis; L-valine biosynthesis; L-valine from pyruvate: step 2/4. Its function is as follows. Involved in the biosynthesis of branched-chain amino acids (BCAA). Catalyzes an alkyl-migration followed by a ketol-acid reduction of (S)-2-acetolactate (S2AL) to yield (R)-2,3-dihydroxy-isovalerate. In the isomerase reaction, S2AL is rearranged via a Mg-dependent methyl migration to produce 3-hydroxy-3-methyl-2-ketobutyrate (HMKB). In the reductase reaction, this 2-ketoacid undergoes a metal-dependent reduction by NADPH to yield (R)-2,3-dihydroxy-isovalerate. The polypeptide is Ketol-acid reductoisomerase (NADP(+)) (Pasteurella multocida (strain Pm70)).